Reading from the N-terminus, the 283-residue chain is Putative 4-diphosphocytidyl-2-C-methyl-D-erythritol kinase (283 aa).

Lys11 is an active-site residue. Pro95 to Ser105 is an ATP binding site. Asp137 is an active-site residue.

The protein belongs to the GHMP kinase family. IspE subfamily.

The catalysed reaction is 4-CDP-2-C-methyl-D-erythritol + ATP = 4-CDP-2-C-methyl-D-erythritol 2-phosphate + ADP + H(+). Functionally, catalyzes the phosphorylation of the position 2 hydroxy group of 4-diphosphocytidyl-2C-methyl-D-erythritol. The protein is Putative 4-diphosphocytidyl-2-C-methyl-D-erythritol kinase (ispE) of Streptococcus uberis (strain ATCC BAA-854 / 0140J).